We begin with the raw amino-acid sequence, 191 residues long: Small ribosomal subunit protein uS5 (191 aa).

Positions 1 to 21 (MAAERERGGRERSREREERDS) are disordered. The S5 DRBM domain maps to 23-86 (FVDKLVHINR…ESAKRNLTRV (64 aa)).

As to quaternary structure, part of the 30S ribosomal subunit. Contacts proteins S4 and S8.

Functionally, with S4 and S12 plays an important role in translational accuracy. In terms of biological role, located at the back of the 30S subunit body where it stabilizes the conformation of the head with respect to the body. This Rhodopseudomonas palustris (strain ATCC BAA-98 / CGA009) protein is Small ribosomal subunit protein uS5.